We begin with the raw amino-acid sequence, 208 residues long: Uracil phosphoribosyltransferase (208 aa).

Residues Arg-78, Arg-103, and 130-138 (DPMLATGGS) contribute to the 5-phospho-alpha-D-ribose 1-diphosphate site. Residues Ile-193 and 198 to 200 (GDA) each bind uracil. Residue Asp-199 coordinates 5-phospho-alpha-D-ribose 1-diphosphate.

It belongs to the UPRTase family. It depends on Mg(2+) as a cofactor.

It carries out the reaction UMP + diphosphate = 5-phospho-alpha-D-ribose 1-diphosphate + uracil. It functions in the pathway pyrimidine metabolism; UMP biosynthesis via salvage pathway; UMP from uracil: step 1/1. With respect to regulation, allosterically activated by GTP. Its function is as follows. Catalyzes the conversion of uracil and 5-phospho-alpha-D-ribose 1-diphosphate (PRPP) to UMP and diphosphate. The chain is Uracil phosphoribosyltransferase from Shewanella oneidensis (strain ATCC 700550 / JCM 31522 / CIP 106686 / LMG 19005 / NCIMB 14063 / MR-1).